Consider the following 576-residue polypeptide: DNA primase (576 aa).

A CHC2-type zinc finger spans residues 40–64 (CPFHNEKTPSFNVVAKKQFYHCFGC). The Toprim domain maps to 251-333 (DSIIVVEGYM…GLDAGFIFLP (83 aa)). Residues E257, D301, and D303 each contribute to the Mg(2+) site.

It belongs to the DnaG primase family. As to quaternary structure, monomer. Interacts with DnaB. The cofactor is Zn(2+). It depends on Mg(2+) as a cofactor.

It carries out the reaction ssDNA + n NTP = ssDNA/pppN(pN)n-1 hybrid + (n-1) diphosphate.. Its function is as follows. RNA polymerase that catalyzes the synthesis of short RNA molecules used as primers for DNA polymerase during DNA replication. The protein is DNA primase of Legionella pneumophila.